The chain runs to 257 residues: Undecaprenyl-diphosphatase (257 aa).

Helical transmembrane passes span 4-24 (LIRV…PISS), 41-61 (SVTL…VVFW), 74-94 (VIGL…TIKT), 103-123 (PLLA…LGRL), 133-153 (LGLG…LPGI), 173-193 (SVTF…VLAI), 209-229 (VLSI…KWLI), and 236-256 (RLHW…LLNL).

This sequence belongs to the UppP family.

It is found in the cell inner membrane. The enzyme catalyses di-trans,octa-cis-undecaprenyl diphosphate + H2O = di-trans,octa-cis-undecaprenyl phosphate + phosphate + H(+). Its function is as follows. Catalyzes the dephosphorylation of undecaprenyl diphosphate (UPP). Confers resistance to bacitracin. This is Undecaprenyl-diphosphatase from Rhodopirellula baltica (strain DSM 10527 / NCIMB 13988 / SH1).